We begin with the raw amino-acid sequence, 188 residues long: Pyridoxal 5'-phosphate synthase subunit PdxT (188 aa).

Gly-47 to Ser-49 contacts L-glutamine. Cys-79 (nucleophile) is an active-site residue. L-glutamine-binding positions include Arg-106 and Ile-134–Arg-135. Residues His-169 and Glu-171 each act as charge relay system in the active site.

Belongs to the glutaminase PdxT/SNO family. As to quaternary structure, in the presence of PdxS, forms a dodecamer of heterodimers. Only shows activity in the heterodimer.

It carries out the reaction aldehydo-D-ribose 5-phosphate + D-glyceraldehyde 3-phosphate + L-glutamine = pyridoxal 5'-phosphate + L-glutamate + phosphate + 3 H2O + H(+). The enzyme catalyses L-glutamine + H2O = L-glutamate + NH4(+). It functions in the pathway cofactor biosynthesis; pyridoxal 5'-phosphate biosynthesis. Functionally, catalyzes the hydrolysis of glutamine to glutamate and ammonia as part of the biosynthesis of pyridoxal 5'-phosphate. The resulting ammonia molecule is channeled to the active site of PdxS. This chain is Pyridoxal 5'-phosphate synthase subunit PdxT, found in Caldicellulosiruptor saccharolyticus (strain ATCC 43494 / DSM 8903 / Tp8T 6331).